Consider the following 609-residue polypeptide: Autophagy-related protein 22-1 (609 aa).

4 helical membrane passes run 95 to 115 (YYAG…GVEI), 117 to 137 (TASF…ILII), 151 to 171 (LLLV…LGVV), and 176 to 196 (MVGA…FVLL). A disordered region spans residues 214-238 (AREPPPALDGSRAQEGHSDTTNDID). Positions 225–238 (RAQEGHSDTTNDID) are enriched in basic and acidic residues. N-linked (GlcNAc...) asparagine glycosylation occurs at Asn244. A helical transmembrane segment spans residues 287-307 (IGIGYIGAIILQIVCILVVIA). Asn309 carries N-linked (GlcNAc...) asparagine glycosylation. 3 helical membrane passes run 317–337 (LVLF…ALWL), 381–401 (ILLF…VSGT), and 415–435 (AALG…AFSW). The N-linked (GlcNAc...) asparagine glycan is linked to Asn443. 4 helical membrane-spanning segments follow: residues 450-470 (IIAC…GFIP), 487-509 (FPLG…SFFG), 522-542 (ALYA…VGII), and 552-572 (AFVF…LVDV).

This sequence belongs to the ATG22 family.

The protein resides in the vacuole membrane. Its function is as follows. Vacuolar effluxer which mediate the efflux of amino acids resulting from autophagic degradation. The release of autophagic amino acids allows the maintenance of protein synthesis and viability during nitrogen starvation. This is Autophagy-related protein 22-1 (atg22-1) from Neosartorya fischeri (strain ATCC 1020 / DSM 3700 / CBS 544.65 / FGSC A1164 / JCM 1740 / NRRL 181 / WB 181) (Aspergillus fischerianus).